The primary structure comprises 574 residues: Methionine--tRNA ligase (574 aa).

Residues 11–21 (PYINGIKHLGN) carry the 'HIGH' region motif. Positions 143, 146, 156, and 159 each coordinate Zn(2+). The 'KMSKS' region signature appears at 345-349 (KFSTS). T348 contributes to the ATP binding site.

This sequence belongs to the class-I aminoacyl-tRNA synthetase family. MetG type 1 subfamily. As to quaternary structure, monomer. The cofactor is Zn(2+).

The protein resides in the cytoplasm. It carries out the reaction tRNA(Met) + L-methionine + ATP = L-methionyl-tRNA(Met) + AMP + diphosphate. Is required not only for elongation of protein synthesis but also for the initiation of all mRNA translation through initiator tRNA(fMet) aminoacylation. This Streptomyces avermitilis (strain ATCC 31267 / DSM 46492 / JCM 5070 / NBRC 14893 / NCIMB 12804 / NRRL 8165 / MA-4680) protein is Methionine--tRNA ligase.